A 317-amino-acid polypeptide reads, in one-letter code: Adenine deaminase (317 aa).

Residues His-14, His-16, and His-194 each coordinate Zn(2+). The active-site Proton donor is the Glu-197. Asp-275 is a Zn(2+) binding site. Substrate is bound at residue Asp-276.

This sequence belongs to the metallo-dependent hydrolases superfamily. Adenosine and AMP deaminases family. Adenine deaminase type 2 subfamily. Zn(2+) serves as cofactor.

The enzyme catalyses adenine + H2O + H(+) = hypoxanthine + NH4(+). Catalyzes the hydrolytic deamination of adenine to hypoxanthine. Plays an important role in the purine salvage pathway and in nitrogen catabolism. The protein is Adenine deaminase of Pseudomonas savastanoi pv. phaseolicola (strain 1448A / Race 6) (Pseudomonas syringae pv. phaseolicola (strain 1448A / Race 6)).